We begin with the raw amino-acid sequence, 827 residues long: Lon protease (827 aa).

The tract at residues Met-1–Glu-27 is disordered. A Lon N-terminal domain is found at Leu-32–Phe-225. ATP is bound at residue Gly-385–Thr-392. The Lon proteolytic domain occupies Ile-625–Pro-806. Catalysis depends on residues Ser-712 and Lys-755.

It belongs to the peptidase S16 family. Homohexamer. Organized in a ring with a central cavity.

It is found in the cytoplasm. The enzyme catalyses Hydrolysis of proteins in presence of ATP.. ATP-dependent serine protease that mediates the selective degradation of mutant and abnormal proteins as well as certain short-lived regulatory proteins. Required for cellular homeostasis and for survival from DNA damage and developmental changes induced by stress. Degrades polypeptides processively to yield small peptide fragments that are 5 to 10 amino acids long. Binds to DNA in a double-stranded, site-specific manner. This Chloroflexus aurantiacus (strain ATCC 29366 / DSM 635 / J-10-fl) protein is Lon protease.